A 215-amino-acid polypeptide reads, in one-letter code: Superoxide dismutase [Mn] (215 aa).

The Mn(2+) site is built by His27, His83, Asp170, and His174.

The protein belongs to the iron/manganese superoxide dismutase family. In terms of assembly, homodimer. Mn(2+) is required as a cofactor.

The catalysed reaction is 2 superoxide + 2 H(+) = H2O2 + O2. In terms of biological role, destroys superoxide anion radicals which are normally produced within the cells and which are toxic to biological systems. The protein is Superoxide dismutase [Mn] (sodA) of Haemophilus influenzae (strain ATCC 51907 / DSM 11121 / KW20 / Rd).